The sequence spans 2052 residues: MDNFFPEGTRVWLRENGQHFPSTVNSCAEGVVVFQTDYGQVFTYKQSTITHQKVMPMQPTDEEGVDDMATLTELHGGAIMHNLYQRYKRNQIYTYIGSIIASVNPYKTITGLYSRDAVDRYSRCHLGELPPHVFAIANECYRCLWKRHDNQCVLISGESGAGKTESTKLILKFLSAISQQSVDLSSKEKTSSVEQAILESSPIMEAFGNAKTVYNNNSSRFGKFVQLNIGQKGNIQGGRIVDYLLEKNRVVRQNPGERNYHIFYALLAGLGHEEREEFYLSVPENYHYLNQSGCVTDRTISDQESFREVIMAMEVMQFSKEEVREVLRLLAGILHLGNIEFITAGGAQVSFKTALGRSAELLGLDPAQLTDALTQRSMFLRGEEILTPLNVQQAADSRDSLAMALYARCFEWVIKKINSRIKGKDDFKSIGILDIFGFENFEVNHFEQFNINYANEKLQEYFNKHIFSLEQLEYSREGLVWEDIDWIDNGECLDLIEKKLGLLALINEESHFPQATDSTLLEKLHNQHANNHFYVKPRVAVNNFGVKHYAGEVQYDVRGILEKNRDTFRDDLLNLLRESRFDFIYDLFEHVSSRNNQDTLKCGSKHRRPTVSSQFKDSLHSLMATLSASNPFFVRCIKPNMQKMPDQFDQAVVVNQLRYSGMLETVRIRKAGYAVRRPFQDFYKRYKVLMRNVALPEDIRGKCTALLQLYDASNSEWQLGKTKVFLRESLEQKLEKRQEEEVTRAAMVIRAHVLGYLARKQYKKVLDCVVIIQKNYRAFLLRRRFLHLKKAAVVFQKQLRGQIARRVYRQLLAEKRAEEEKRKREEEEKRKREEEERERERERREAELRAQQEEAARKQRELEALQQESQRAAELSRELEKQKENKQVEEILRLEKEIEDLQRMKERQELSLTEASLQKLQQLRDEELRRLEDEACRAAQEFLESLNFDEIDECVRNIERSLSVGSGCTGEQGAGAEKPSFNFSQPYPEEEEVDEGFEADDDAFKDSPNPSEHGHSDQRTSGIRTSDESSEEDPYMNDTVVPTSPSADSTVLLAPSEHDSSAGEPTYCLPQTPGALPAPEGDYDYDQDDYEDGAITSGSSVTFSNSCSSQWSPDYRCSVGTYNSSGAYRFSSEGAQSSFEDSEEDFDSRFDTDDELSYRRDSVYSCVTLPYFHSFLYMKGGLMNSWKRRWCVLKDETFLWFRSKQEALKQGWLHKKGGGSSTLSRRNWKKRWFVLRQAKLMYFENDSEEKLKGTVEVRAAKEIIDNTSKENGIDIIMADRTFHLIAESPEDASQWFSVLSQVHASTDQEIREMHDEQANPQNAVGTLDVGLIDSVCASDSPDRPNSFVIITANRVLHCNADTPEEMHHWITLLQRSKGDTRVEGQEFIVRGWLHKEVKNSPKMSSLKLKKRWFVLTHNSLDYYKSSEKNALKLGTLVLNSLCSVVPPDEKIFKETGYWNVTVYGRKHCYRLYTKLLNEATRWSSAIQNVTDTKAPIDTPTQQLIQDIKENCLNSDVVEQIYKRNPILRHTHHPLHSPLLPLPYGDINLNLLKDKGYTTLQDEAIKIFNSLQQLESMSDPIPIIQGILQTGHDLRPLRDELYCQLIKQTNKVPHPGSVGNLCSWQILTCLSCTFLPSRGILKYLKFHLRRIREQFPGTEMEKYALFIYESLKKTKCREFVPSRDEIEALIHRQEMTSTVHCHGGGSCKITVNSHTTAGEVVEKLIRGLAMEDSRNMFALFEYNGHVDKAIESRTIVADVLAKFEKLAATSEVGEQPWKFYFKLYCFLDTDNVPKDSVEFAFMFEQAHEAVIHGHYPAPEENLQVLAALRLQYLQGDYAPHAPVPPLEEVYSLQRLKARISQSTKSFTPGERLEKRRTSFLEGTLRRSFRTGSAIRQKAEEEQMVDMWVKEEVCSARASILDKWKKFQGMSQEQAMAKYMALIKEWPGYGSTLFDVECKEGGFPQDLWLGVSADAVSVYKRGEGRPLEVFQYEHILSFGAPLANTYKIVVDERELLFETSEVVDVAKLMKAYISMIVKKRYSTSRSVSSQGSSR.

Methionine 1 is subject to N-acetylmethionine. The 677-residue stretch at 63–739 (EGVDDMATLT…LEQKLEKRQE (677 aa)) folds into the Myosin motor domain. Residues asparagine 104, tyrosine 113, 160–165 (GAGKTE), and asparagine 215 contribute to the ATP site. Positions 619–641 (LHSLMATLSASNPFFVRCIKPNM) are actin-binding. IQ domains lie at 742–763 (VTRA…KQYK), 764–787 (KVLD…RFLH), and 788–817 (LKKA…EKRA). The interval 814-884 (EKRAEEEKRK…LSRELEKQKE (71 aa)) is SAH. A disordered region spans residues 819-843 (EEKRKREEEEKRKREEEERERERER). The stretch at 885-935 (NKQVEEILRLEKEIEDLQRMKERQELSLTEASLQKLQQLRDEELRRLEDEA) forms a coiled coil. 2 positions are modified to phosphoserine: serine 963 and serine 966. The disordered stretch occupies residues 964–1093 (VGSGCTGEQG…DYDQDDYEDG (130 aa)). Residues 988–1003 (PEEEEVDEGFEADDDA) are compositionally biased toward acidic residues. The span at 1040–1049 (VVPTSPSADS) shows a compositional bias: polar residues. Over residues 1081–1092 (GDYDYDQDDYED) the composition is skewed to acidic residues. Phosphothreonine is present on threonine 1152. PH domains are found at residues 1206–1304 (EALK…QVHA) and 1386–1491 (EFIV…NVTD). The region spanning 1541–1689 (LPYGDINLNL…PSRDEIEALI (149 aa)) is the MyTH4 domain. Positions 1694–2038 (MTSTVHCHGG…AYISMIVKKR (345 aa)) constitute an FERM domain.

The protein belongs to the TRAFAC class myosin-kinesin ATPase superfamily. Myosin family. In terms of assembly, monomer, when in an inactive conformation in the cytosol. Homodimer in its active, membrane-bound conformation; antiparallel coiled coil-mediated dimer formation. Interacts with ECPAS. Interacts with NEO 1. Interacts with VASP. Interacts with DCC and ITGB5; the presence of DCC inhibits ITGB5 binding. Interacts with tubulin; ITGB5 or DCC binding inhibits tubulin binding. Interacts strongly with CALM3 and weakly with CALM, the CALM3 interaction is essential for function in filopodial extension and motility. Interacts with ITGB1, ITGB3 and ITGB5. In terms of tissue distribution, detected in kidney, testis, liver, kidney, cerebellum and brain cortex (at protein level).

It localises to the cytoplasm. Its subcellular location is the cytosol. The protein localises to the cell projection. The protein resides in the lamellipodium. It is found in the ruffle. It localises to the cytoskeleton. Its subcellular location is the filopodium tip. The protein localises to the cell cortex. The protein resides in the filopodium membrane. Myosins are actin-based motor molecules with ATPase activity. Unconventional myosins serve in intracellular movements. MYO10 binds to actin filaments and actin bundles and functions as a plus end-directed motor. Moves with higher velocity and takes larger steps on actin bundles than on single actin filaments. The tail domain binds to membranous compartments containing phosphatidylinositol 3,4,5-trisphosphate, which are then moved relative to actin filaments. Regulates cell shape, cell spreading and cell adhesion. Stimulates the formation and elongation of filopodia. In hippocampal neurons it induces the formation of dendritic filopodia by trafficking the actin-remodeling protein VASP to the tips of filopodia, where it promotes actin elongation. Plays a role in formation of the podosome belt in osteoclasts. In Bos taurus (Bovine), this protein is Unconventional myosin-X (MYO10).